A 387-amino-acid chain; its full sequence is S-adenosylmethionine synthase (387 aa).

H15 is an ATP binding site. D17 is a binding site for Mg(2+). A K(+)-binding site is contributed by E43. L-methionine contacts are provided by E56 and Q99. A flexible loop region spans residues Q99–R109. ATP contacts are provided by residues D166 to K168, R232 to F233, D241, R247 to K248, A264, and K268. D241 lines the L-methionine pocket. L-methionine is bound at residue K272.

Belongs to the AdoMet synthase family. Homotetramer; dimer of dimers. Requires Mg(2+) as cofactor. The cofactor is K(+).

It is found in the cytoplasm. The catalysed reaction is L-methionine + ATP + H2O = S-adenosyl-L-methionine + phosphate + diphosphate. It participates in amino-acid biosynthesis; S-adenosyl-L-methionine biosynthesis; S-adenosyl-L-methionine from L-methionine: step 1/1. Its function is as follows. Catalyzes the formation of S-adenosylmethionine (AdoMet) from methionine and ATP. The overall synthetic reaction is composed of two sequential steps, AdoMet formation and the subsequent tripolyphosphate hydrolysis which occurs prior to release of AdoMet from the enzyme. In Nitrosomonas eutropha (strain DSM 101675 / C91 / Nm57), this protein is S-adenosylmethionine synthase.